The following is a 423-amino-acid chain: MKVDVLLGLQWGDEGKGKVVDVLTPNYDVVTRFQGGPNAGHTLEFNGEKYVLRSIPSGIFQGGKINVIGNGVVLDPLLFKQEAESLAASGHDITKQLYISKKAHLILPTHRILDAAYEAAKGSGKIGTTGKGIGPTYTDKISRNGVRVGDLLHNFEEKYAAAKAKHEAILRSLNYEYDITEMEAQWLEALNYLRQFKLIDSEHVINNYLKEGKSVLAEGAQGTMLDIDFGSYPFVTSSNTICAGCCTGLGVSPRNIGEVYGIFKAYCTRVGSGPFPTELFDEVGDKIGQLGHEFGAVTGRKRRCGWIDLVALRYAVMINGVSQLIMMKSDVLDTFDTIKACVAYKMNGVETNEFPYEIDDTIEPVYVELPGWKTDMTKMRSEDEFPEEFNAYLSFLEEELGVPVKIVSVGPDREQTIVRYTEE.

Residues 12 to 18 and 40 to 42 contribute to the GTP site; these read GDEGKGK and GHT. D13 acts as the Proton acceptor in catalysis. Residues D13 and G40 each coordinate Mg(2+). IMP-binding positions include 13 to 16, 38 to 41, T129, R143, Q221, T236, and R300; these read DEGK and NAGH. The active-site Proton donor is H41. Position 296–302 (296–302) interacts with substrate; it reads AVTGRKR. GTP contacts are provided by residues R302, 328–330, and 408–410; these read KSD and SVG.

It belongs to the adenylosuccinate synthetase family. In terms of assembly, homodimer. Mg(2+) serves as cofactor.

The protein localises to the cytoplasm. It carries out the reaction IMP + L-aspartate + GTP = N(6)-(1,2-dicarboxyethyl)-AMP + GDP + phosphate + 2 H(+). Its pathway is purine metabolism; AMP biosynthesis via de novo pathway; AMP from IMP: step 1/2. Its function is as follows. Plays an important role in the de novo pathway of purine nucleotide biosynthesis. Catalyzes the first committed step in the biosynthesis of AMP from IMP. The protein is Adenylosuccinate synthetase of Parabacteroides distasonis (strain ATCC 8503 / DSM 20701 / CIP 104284 / JCM 5825 / NCTC 11152).